The chain runs to 118 residues: Putative pterin-4-alpha-carbinolamine dehydratase (118 aa).

It belongs to the pterin-4-alpha-carbinolamine dehydratase family.

It carries out the reaction (4aS,6R)-4a-hydroxy-L-erythro-5,6,7,8-tetrahydrobiopterin = (6R)-L-erythro-6,7-dihydrobiopterin + H2O. The sequence is that of Putative pterin-4-alpha-carbinolamine dehydratase (phhB) from Xanthomonas axonopodis pv. citri (strain 306).